Here is a 257-residue protein sequence, read N- to C-terminus: Cilia- and flagella-associated protein 300 (257 aa).

It belongs to the CFAP300 family.

Its subcellular location is the cytoplasm. It is found in the cytoskeleton. The protein localises to the flagellum axoneme. Functionally, cilium- and flagellum-specific protein that plays a role in axonemal structure organization and motility. Plays a role in outer and inner dynein arm assembly. The sequence is that of Cilia- and flagella-associated protein 300 from Chlamydomonas reinhardtii (Chlamydomonas smithii).